The following is a 528-amino-acid chain: Cytochrome P450 monooxygenase vrcB (528 aa).

A helical membrane pass occupies residues 5 to 27 (YGLFFAAVALYSVALVIYRLYLH). C470 serves as a coordination point for heme.

Belongs to the cytochrome P450 family. The cofactor is heme.

The protein localises to the membrane. The catalysed reaction is variecoladiene + 4 reduced [NADPH--hemoprotein reductase] + 4 O2 = variecolin + 4 oxidized [NADPH--hemoprotein reductase] + 6 H2O + 4 H(+). It participates in secondary metabolite biosynthesis; terpenoid biosynthesis. Cytochrome P450 monooxygenase; part of the gene cluster that mediates the biosynthesis of the sesterterpene variecolin. The first step in the pathway is performed by the variecoladiene synthase vrcA that possesses both prenyl transferase and terpene cyclase activity, converting isopentenyl diphosphate and dimethylallyl diphosphate into geranylfarnesyl pyrophosphate (GFPP) and then converting GFPP into the tetracyclic variecoladiene. The cytochrome P450 monooxygenase vrcB then catalyzes multiple oxidations at C-5 and C-20 positions to yield variecolin. The polypeptide is Cytochrome P450 monooxygenase vrcB (Aspergillus aculeatus (strain ATCC 16872 / CBS 172.66 / WB 5094)).